A 498-amino-acid chain; its full sequence is Probable cytosol aminopeptidase (498 aa).

Mn(2+) contacts are provided by lysine 264 and aspartate 269. Residue lysine 276 is part of the active site. The Mn(2+) site is built by aspartate 287, aspartate 346, and glutamate 348. Arginine 350 is an active-site residue.

The protein belongs to the peptidase M17 family. Mn(2+) serves as cofactor.

The protein localises to the cytoplasm. The enzyme catalyses Release of an N-terminal amino acid, Xaa-|-Yaa-, in which Xaa is preferably Leu, but may be other amino acids including Pro although not Arg or Lys, and Yaa may be Pro. Amino acid amides and methyl esters are also readily hydrolyzed, but rates on arylamides are exceedingly low.. The catalysed reaction is Release of an N-terminal amino acid, preferentially leucine, but not glutamic or aspartic acids.. Presumably involved in the processing and regular turnover of intracellular proteins. Catalyzes the removal of unsubstituted N-terminal amino acids from various peptides. This is Probable cytosol aminopeptidase from Xanthobacter autotrophicus (strain ATCC BAA-1158 / Py2).